Here is a 43-residue protein sequence, read N- to C-terminus: Cytochrome b559 subunit beta (43 aa).

Residues 18–34 (WLAVHTLAVPSVFFLGA) traverse the membrane as a helical segment. His-22 contributes to the heme binding site.

Belongs to the PsbE/PsbF family. In terms of assembly, heterodimer of an alpha subunit and a beta subunit. PSII is composed of 1 copy each of membrane proteins PsbA, PsbB, PsbC, PsbD, PsbE, PsbF, PsbH, PsbI, PsbJ, PsbK, PsbL, PsbM, PsbT, PsbX, PsbY, PsbZ, Psb30/Ycf12, peripheral proteins PsbO, CyanoQ (PsbQ), PsbU, PsbV and a large number of cofactors. It forms dimeric complexes. Requires heme b as cofactor.

It localises to the cellular thylakoid membrane. Functionally, this b-type cytochrome is tightly associated with the reaction center of photosystem II (PSII). PSII is a light-driven water:plastoquinone oxidoreductase that uses light energy to abstract electrons from H(2)O, generating O(2) and a proton gradient subsequently used for ATP formation. It consists of a core antenna complex that captures photons, and an electron transfer chain that converts photonic excitation into a charge separation. The chain is Cytochrome b559 subunit beta from Picosynechococcus sp. (strain ATCC 27264 / PCC 7002 / PR-6) (Agmenellum quadruplicatum).